The sequence spans 186 residues: Der GTPase-activating protein YihI (186 aa).

The disordered stretch occupies residues 42-77 (KAREDKKKRKHKGLASGSRHSAVEEKANKLQNEIKD). The segment covering 62-77 (SAVEEKANKLQNEIKD) has biased composition (basic and acidic residues).

It belongs to the YihI family. As to quaternary structure, interacts with Der.

Its function is as follows. A GTPase-activating protein (GAP) that modifies Der/EngA GTPase function. May play a role in ribosome biogenesis. This chain is Der GTPase-activating protein YihI, found in Haemophilus influenzae (strain ATCC 51907 / DSM 11121 / KW20 / Rd).